The sequence spans 94 residues: MGRSLKKGPYCDAKLLKKIIDMNEKGEKRVIKTWSRRSTIFPEMVGHTIAVHDGRKHVPIYITEDMVGHKLGEFAPTRVFRGHGAHTERSTALK.

Belongs to the universal ribosomal protein uS19 family.

Protein S19 forms a complex with S13 that binds strongly to the 16S ribosomal RNA. This is Small ribosomal subunit protein uS19 from Moorella thermoacetica (strain ATCC 39073 / JCM 9320).